The sequence spans 2053 residues: Cell adhesion molecule DSCAML1 (2053 aa).

The first 18 residues, Met-1–Pro-18, serve as a signal peptide directing secretion. 9 Ig-like C2-type domains span residues Glu-19–Val-119, Pro-115–Ser-217, Pro-226–Thr-306, Pro-314–Ala-402, Pro-408–Asn-501, Pro-506–Ser-586, Pro-596–Ile-685, Pro-690–Thr-784, and Pro-788–Gln-885. The Extracellular portion of the chain corresponds to Glu-19 to Lys-1591. Asn-29 and Asn-79 each carry an N-linked (GlcNAc...) asparagine glycan. 5 disulfide bridges follow: Cys-47-Cys-103, Cys-146-Cys-198, Cys-247-Cys-294, Cys-336-Cys-386, and Cys-429-Cys-485. N-linked (GlcNAc...) asparagine glycans are attached at residues Asn-368, Asn-471, Asn-513, Asn-556, Asn-666, Asn-710, Asn-749, Asn-796, and Asn-809. Cystine bridges form between Cys-526-Cys-575 and Cys-617-Cys-669. A disulfide bond links Cys-711 and Cys-767. An intrachain disulfide couples Cys-810 to Cys-867. Fibronectin type-III domains lie at Pro-887 to Ala-984, Pro-989 to Asp-1088, Pro-1093 to Asp-1189, and Pro-1193 to Ala-1288. Asn-926, Asn-1082, Asn-1144, Asn-1162, Asn-1275, and Asn-1345 each carry an N-linked (GlcNAc...) asparagine glycan. Residues Glu-1278–Asn-1377 form the Ig-like C2-type 10 domain. Cysteines 1311 and 1363 form a disulfide. 2 Fibronectin type-III domains span residues Pro-1383–Arg-1477 and Glu-1478–Pro-1578. N-linked (GlcNAc...) asparagine glycans are attached at residues Asn-1492, Asn-1531, and Asn-1561. A helical membrane pass occupies residues Leu-1592 to Val-1612. Topologically, residues Arg-1613 to Val-2053 are cytoplasmic. Disordered regions lie at residues Pro-1715–Arg-1741, His-1773–Ser-1803, Ser-1840–Ser-1862, and Leu-1974–Val-2053. Positions Lys-1732 to Arg-1741 are enriched in basic residues. A compositionally biased stretch (polar residues) spans His-1773–Gln-1789. The segment covering Pro-1977–Glu-2009 has biased composition (pro residues). Positions Glu-2029–Gln-2041 are enriched in polar residues.

In terms of assembly, homodimer; mediates homophilic interactions to promote cell adhesion. Detected in heart, liver, pancreas, skeletal muscle, kidney and in brain, in particular in the amygdala, caudate nucleus, corpus callosum, hippocampus, substantia nigra, thalamus and subthalamus.

It localises to the cell membrane. The protein resides in the synapse. Functionally, cell adhesion molecule that plays a role in neuronal self-avoidance. Promotes repulsion between specific neuronal processes of either the same cell or the same subtype of cells. Promotes both isoneuronal self-avoidance for creating an orderly neurite arborization in retinal rod bipolar cells and heteroneuronal self-avoidance to maintain mosaic spacing between AII amacrine cells. Adhesion molecule that promotes lamina-specific synaptic connections in the retina: expressed in specific subsets of interneurons and retinal ganglion cells (RGCs) and promotes synaptic connectivity via homophilic interactions. The polypeptide is Cell adhesion molecule DSCAML1 (DSCAML1) (Homo sapiens (Human)).